Reading from the N-terminus, the 704-residue chain is Pentatricopeptide repeat-containing protein At1g56690, mitochondrial (704 aa).

The N-terminal 12 residues, 1–12, are a transit peptide targeting the mitochondrion; it reads MKRLKLILRRTY. PPR repeat units lie at residues 16-46, 47-81, 82-108, 109-143, 144-170, 171-205, 206-232, 233-267, 268-294, 295-329, 330-364, 365-395, 396-430, 431-465, and 467-497; these read TGVN…LQFK, AIGS…NVVS, WNGL…MPER, NVVS…NEVS, WTVM…MPVK, DVVA…NVVT, WTTM…MPEK, TEVS…PVIA, CNAM…MEDR, DNAT…GVRP, SFPS…QFDD, DVYV…FSSK, DIIM…GTMP, NKVT…FCVT, and TVEH…MTIK. Residues 502–577 form a type E motif region; sequence VWGALLGACK…FPGCSWIEVG (76 aa). Residues 578–609 are type E(+) motif; sequence KKVHMFTRGGIKNHPEQAMILMMLEKTDGLLR. The interval 610–704 is type DYW motif; the sequence is EAGYSPDCSH…NGECSCRDYW (95 aa).

It belongs to the PPR family. PCMP-H subfamily.

It localises to the mitochondrion. The polypeptide is Pentatricopeptide repeat-containing protein At1g56690, mitochondrial (PCMP-H69) (Arabidopsis thaliana (Mouse-ear cress)).